The following is a 1019-amino-acid chain: Enteropeptidase (1019 aa).

The N-myristoyl glycine moiety is linked to residue Gly2. Over 2 to 18 (GSKRGISSRHHSLSSYE) the chain is Cytoplasmic. The chain crosses the membrane as a helical; Signal-anchor for type II membrane protein span at residues 19 to 47 (IMFAALFAILVVLCAGLIAVSCLTIKESQ). Topologically, residues 48-1019 (RGAALGQSHE…FTEWIQSFLH (972 aa)) are extracellular. An SEA domain is found at 54–169 (QSHEARATFK…NSVDILDKLT (116 aa)). 3 N-linked (GlcNAc...) asparagine glycosylation sites follow: Asn116, Asn147, and Asn179. Residues 182–223 (IECLPGSSPCTDALTCIKADLFCDGEVNCPDGSDEDNKMCAT) enclose the LDL-receptor class A 1 domain. 4 cysteine pairs are disulfide-bonded: Cys184/Cys197, Cys191/Cys210, Cys204/Cys221, and Cys225/Cys253. The 110-residue stretch at 225 to 334 (CDGRFLLTGS…VGFNATYTAF (110 aa)) folds into the CUB 1 domain. Residues Asn328, Asn335, Asn388, Asn440, Asn470, Asn503, Asn534, and Asn630 are each glycosylated (N-linked (GlcNAc...) asparagine). Residues 342–504 (YEKINCNFED…ISLTYGICNG (163 aa)) enclose the MAM domain. A disulfide bond links Cys524 and Cys552. Positions 524–634 (CGGPFELWEP…GGFKANFTTG (111 aa)) constitute a CUB 2 domain. Residues 641–679 (EPCKADHFQCKNGECVPLVNLCDGHLHCEDGSDEADCVR) form the LDL-receptor class A 2 domain. 3 disulfide bridges follow: Cys643-Cys655, Cys650-Cys668, and Cys662-Cys677. An SRCR domain is found at 678–771 (VRFFNGTTNN…LIRLQCNHKS (94 aa)). N-linked (GlcNAc...) asparagine glycans are attached at residues Asn682, Asn706, and Asn725. 3 disulfide bridges follow: Cys757–Cys767, Cys772–Cys896, and Cys810–Cys826. The Peptidase S1 domain maps to 785 to 1019 (IVGGSNAKEG…FTEWIQSFLH (235 aa)). Catalysis depends on His825, which acts as the Charge relay system. A glycan (N-linked (GlcNAc...) asparagine) is linked at Asn848. Asp876 acts as the Charge relay system in catalysis. Asn887, Asn909, and Asn949 each carry an N-linked (GlcNAc...) asparagine glycan. Cystine bridges form between Cys910–Cys977, Cys941–Cys956, and Cys967–Cys995. Ser971 serves as the catalytic Charge relay system.

Belongs to the peptidase S1 family. In terms of assembly, heterodimer of a catalytic (light) chain and a multidomain (heavy) chain linked by a disulfide bond. In terms of processing, the chains are derived from a single precursor that is cleaved by a trypsin-like protease. As to expression, intestinal brush border.

The protein resides in the membrane. It carries out the reaction Activation of trypsinogen by selective cleavage of 6-Lys-|-Ile-7 bond.. Its function is as follows. Responsible for initiating activation of pancreatic proteolytic proenzymes (trypsin, chymotrypsin and carboxypeptidase A). It catalyzes the conversion of trypsinogen to trypsin which in turn activates other proenzymes including chymotrypsinogen, procarboxypeptidases, and proelastases. This Homo sapiens (Human) protein is Enteropeptidase (TMPRSS15).